Here is a 176-residue protein sequence, read N- to C-terminus: Disulfide bond formation protein B (176 aa).

Residues 1–14 lie on the Cytoplasmic side of the membrane; sequence MLRFLNQCSQGRGA. Residues 15–31 form a helical membrane-spanning segment; the sequence is WLLMAFTALALELTALW. At 32 to 49 the chain is on the periplasmic side; the sequence is FQHVMLLKPCVLCIYERC. A disulfide bridge links C41 with C44. A helical transmembrane segment spans residues 50–65; the sequence is ALFGVLGAALIGAIAP. Topologically, residues 66 to 71 are cytoplasmic; that stretch reads KTPLRY. Residues 72–89 traverse the membrane as a helical segment; sequence VAMVIWLYSAFRGVQLTY. Over 90 to 144 the chain is Periplasmic; it reads EHTMLQLYPSPFATCDFMARFPEWLPLDKWVPQVFVASGDCAERQWEFLGLEMPQ. A disulfide bond links C104 and C130. Residues 145 to 163 form a helical membrane-spanning segment; sequence WLLGIFIAYLIVAVLVVIS. Over 164–176 the chain is Cytoplasmic; sequence QPFKAKKRDLFGR.

It belongs to the DsbB family.

The protein resides in the cell inner membrane. In terms of biological role, required for disulfide bond formation in some periplasmic proteins. Acts by oxidizing the DsbA protein. This Escherichia coli O1:K1 / APEC protein is Disulfide bond formation protein B.